The sequence spans 257 residues: Ribonuclease HII (257 aa).

The region spanning 72–257 (TYIAGIDEVG…FAPIKDMIQK (186 aa)) is the RNase H type-2 domain. The a divalent metal cation site is built by Asp78, Glu79, and Asp170.

It belongs to the RNase HII family. Mn(2+) serves as cofactor. Mg(2+) is required as a cofactor.

The protein localises to the cytoplasm. It carries out the reaction Endonucleolytic cleavage to 5'-phosphomonoester.. In terms of biological role, endonuclease that specifically degrades the RNA of RNA-DNA hybrids. This Bacillus cereus (strain ATCC 10987 / NRS 248) protein is Ribonuclease HII.